Consider the following 294-residue polypeptide: Acetylglutamate kinase (294 aa).

Residues 64-65 (GG), Arg-86, and Asn-189 contribute to the substrate site.

This sequence belongs to the acetylglutamate kinase family. ArgB subfamily.

The protein resides in the cytoplasm. It catalyses the reaction N-acetyl-L-glutamate + ATP = N-acetyl-L-glutamyl 5-phosphate + ADP. Its pathway is amino-acid biosynthesis; L-arginine biosynthesis; N(2)-acetyl-L-ornithine from L-glutamate: step 2/4. In terms of biological role, catalyzes the ATP-dependent phosphorylation of N-acetyl-L-glutamate. The protein is Acetylglutamate kinase of Carboxydothermus hydrogenoformans (strain ATCC BAA-161 / DSM 6008 / Z-2901).